Reading from the N-terminus, the 254-residue chain is 5-oxoprolinase subunit A (254 aa).

It belongs to the LamB/PxpA family. In terms of assembly, forms a complex composed of PxpA, PxpB and PxpC.

It carries out the reaction 5-oxo-L-proline + ATP + 2 H2O = L-glutamate + ADP + phosphate + H(+). Catalyzes the cleavage of 5-oxoproline to form L-glutamate coupled to the hydrolysis of ATP to ADP and inorganic phosphate. The sequence is that of 5-oxoprolinase subunit A from Burkholderia thailandensis (strain ATCC 700388 / DSM 13276 / CCUG 48851 / CIP 106301 / E264).